The sequence spans 607 residues: MNNDQRLERQSRIRNFSIIAHIDHGKSTLADRILERTGALTDREMKEQALDAMDLERERGITIKLNAVQLKYKAKDGNEYIFHLIDTPGHVDFTYEVSRSLAACEGALLIVDSAQGIEAQTLANVYLALDNDLEILPVINKIDLPSAEPERVKKEVEDVIGLDASDAVLASAKNGIGIEDILEQVVEKVPAPAGDPTAPLKALIFDSLYDPYRGVIAYIRIVEGTVRPGEKIRMMQTGKEFEVNEVGVFTPKAVKCEELTVGDVGFLTAAIKNVSDSRVGDTITSAVNPAQEALPGYRRMNPMVYCGLYPIDTNDYNDLREALERLELNDASLQYEPETSQALGFGFRCGFLGLLHMEIIQERIEREFGISLITTAPSVIYHVTLTDGNTIQIDNPTNMPDPQKMDHVEEPYVKSTVMVPNDYVGAVMELCQSKRGIFVDMQYLDENRVQIIYEIPLSEIVYDFFDQLKSNTKGYASFDYELIGYRQSKLVKMDILLNGEKVDALSVIVHRDSAYERGKVIVEKLKELIPRQQFEVPVQASIGTKIIARSTIKAIRKNVLAKCYGGDISRKRKLLEKQKEGKKRMKAVGNVEIPQEAFMAVLRMDDK.

Residues Ser-11–Ala-193 form the tr-type G domain. Residues Asp-23–Thr-28 and Asn-140–Asp-143 contribute to the GTP site.

It belongs to the TRAFAC class translation factor GTPase superfamily. Classic translation factor GTPase family. LepA subfamily.

The protein resides in the cell membrane. It carries out the reaction GTP + H2O = GDP + phosphate + H(+). Functionally, required for accurate and efficient protein synthesis under certain stress conditions. May act as a fidelity factor of the translation reaction, by catalyzing a one-codon backward translocation of tRNAs on improperly translocated ribosomes. Back-translocation proceeds from a post-translocation (POST) complex to a pre-translocation (PRE) complex, thus giving elongation factor G a second chance to translocate the tRNAs correctly. Binds to ribosomes in a GTP-dependent manner. The protein is Elongation factor 4 of Shouchella clausii (strain KSM-K16) (Alkalihalobacillus clausii).